The sequence spans 489 residues: Adenosylhomocysteinase (489 aa).

Residues Thr-68, Asp-151, and Glu-213 each coordinate substrate. Position 214–216 (214–216 (TTT)) interacts with NAD(+). Positions 243 and 247 each coordinate substrate. NAD(+) is bound by residues Asn-248, 277–282 (GYGDVG), Glu-300, Asn-335, 356–358 (IGH), and Asn-403.

This sequence belongs to the adenosylhomocysteinase family. It depends on NAD(+) as a cofactor.

The protein resides in the cytoplasm. It carries out the reaction S-adenosyl-L-homocysteine + H2O = L-homocysteine + adenosine. Its pathway is amino-acid biosynthesis; L-homocysteine biosynthesis; L-homocysteine from S-adenosyl-L-homocysteine: step 1/1. May play a key role in the regulation of the intracellular concentration of adenosylhomocysteine. The sequence is that of Adenosylhomocysteinase from Mycobacterium sp. (strain KMS).